The primary structure comprises 397 residues: MLQSIHLRFSSTPSPSKRESLIIPSVICSFPFTSSSFRPKQTQKLKRLVQFCAPYEVGGGYTDEELFERYGTQQNQTNVKDKLDPAEYEALLKGGEQVTSVLEEMITLLEDMKMNEASENVAVELAAQGVIGKRVDEMESGFMMALDYMIQLADKDQDEKRKSLLEVVKETVLSHLTKKCPPHVQVIGLLCRTPKKESRHELLRRVAAGGGAFESENGTKLHIPGANLNDIANQADDLLETMETRPAIPDRKLLARLVLIREEARNMMGGGILDERNDRGFTTLPESEVNFLAKLVALKPGKTVQQMIQNVMQGKDEGADNLSKEDDSSTEGRKPSGLNGRGSVTGRKPLPVRPGMFLETVTKVLGSIYSGNASGITAQHLEWVHQKTLQVLEEIAY.

Residues 1–52 (MLQSIHLRFSSTPSPSKRESLIIPSVICSFPFTSSSFRPKQTQKLKRLVQFC) constitute a chloroplast transit peptide. Basic and acidic residues predominate over residues 315–334 (KDEGADNLSKEDDSSTEGRK). The tract at residues 315 to 351 (KDEGADNLSKEDDSSTEGRKPSGLNGRGSVTGRKPLP) is disordered.

As to quaternary structure, interacts with FSD2 and MRL7. In terms of tissue distribution, highly expressed in young leaves, shoots and flowers. Expressed at low levels in stems and siliques.

Its subcellular location is the plastid. It is found in the chloroplast stroma. The protein resides in the chloroplast nucleoid. Plays an essential role in early steps of chloroplast development. May be involved in the redox control of plastid gene expression by maintening the redox state around chloroplast nucleoids. May positively regulate plastid-encoded RNA polymerase (PEP) activity, through binding to FSD2. The protein is Protein PEP-RELATED DEVELOPMENT ARRESTED 1, chloroplastic (PRDA1) of Arabidopsis thaliana (Mouse-ear cress).